The following is a 148-amino-acid chain: Lysozyme-like protein 6 (148 aa).

A signal peptide spans 1–19; the sequence is MTSPLLISLASCLVAVNQA. Residues 20-148 form the C-type lysozyme domain; the sequence is SLIGRCDLAK…SYWMTGCHLA (129 aa). 4 cysteine pairs are disulfide-bonded: Cys-25-Cys-145, Cys-49-Cys-133, Cys-83-Cys-98, and Cys-94-Cys-112. Catalysis depends on residues Glu-54 and Asp-71.

It belongs to the glycosyl hydrolase 22 family. Monomer.

The protein localises to the secreted. The protein resides in the cell surface. Its subcellular location is the cell projection. It localises to the cilium. It is found in the flagellum. It carries out the reaction Hydrolysis of (1-&gt;4)-beta-linkages between N-acetylmuramic acid and N-acetyl-D-glucosamine residues in a peptidoglycan and between N-acetyl-D-glucosamine residues in chitodextrins.. Functionally, may be involved sperm-egg plasma membrane adhesion and fusion during fertilization. Exhibits bacteriolytic activity in vitro against Micrococcus luteus and Staphylococcus aureus. Shows weak bacteriolytic activity against Gram-positive bacteria at physiological pH. Bacteriolytic activity is pH-dependent, with a maximum at around pH 5.6. In Bos taurus (Bovine), this protein is Lysozyme-like protein 6 (LYZL6).